The sequence spans 210 residues: Thymidylate kinase (210 aa).

10–17 (GLEGAGKT) lines the ATP pocket.

Belongs to the thymidylate kinase family.

The catalysed reaction is dTMP + ATP = dTDP + ADP. Its function is as follows. Phosphorylation of dTMP to form dTDP in both de novo and salvage pathways of dTTP synthesis. In Actinobacillus succinogenes (strain ATCC 55618 / DSM 22257 / CCUG 43843 / 130Z), this protein is Thymidylate kinase.